A 385-amino-acid chain; its full sequence is Acetate kinase (385 aa).

N9 is a binding site for Mg(2+). K16 is an ATP binding site. Position 87 (R87) interacts with substrate. D144 serves as the catalytic Proton donor/acceptor. ATP-binding positions include 202-206 (HLGSG) and 277-279 (DMR). E373 contacts Mg(2+).

The protein belongs to the acetokinase family. In terms of assembly, homodimer. Requires Mg(2+) as cofactor. Mn(2+) serves as cofactor.

It localises to the cytoplasm. The enzyme catalyses acetate + ATP = acetyl phosphate + ADP. The protein operates within metabolic intermediate biosynthesis; acetyl-CoA biosynthesis; acetyl-CoA from acetate: step 1/2. Functionally, catalyzes the formation of acetyl phosphate from acetate and ATP. Can also catalyze the reverse reaction. The sequence is that of Acetate kinase from Rickettsia prowazekii (strain Madrid E).